Reading from the N-terminus, the 233-residue chain is Adenosylcobinamide-GDP ribazoletransferase (233 aa).

The next 7 membrane-spanning stretches (helical) occupy residues 24 to 44, 46 to 66, 96 to 116, 117 to 137, 156 to 176, 184 to 204, and 209 to 229; these read LWAF…VLYL, LPLS…LLHL, IAGL…LQLV, PFYA…LALA, SGQL…VVVY, LLGL…FGGI, and IGAI…FAGA.

The protein belongs to the CobS family. Mg(2+) serves as cofactor.

It is found in the cell membrane. It catalyses the reaction alpha-ribazole + adenosylcob(III)inamide-GDP = adenosylcob(III)alamin + GMP + H(+). It carries out the reaction alpha-ribazole 5'-phosphate + adenosylcob(III)inamide-GDP = adenosylcob(III)alamin 5'-phosphate + GMP + H(+). Its pathway is cofactor biosynthesis; adenosylcobalamin biosynthesis; adenosylcobalamin from cob(II)yrinate a,c-diamide: step 7/7. Joins adenosylcobinamide-GDP and alpha-ribazole to generate adenosylcobalamin (Ado-cobalamin). Also synthesizes adenosylcobalamin 5'-phosphate from adenosylcobinamide-GDP and alpha-ribazole 5'-phosphate. The polypeptide is Adenosylcobinamide-GDP ribazoletransferase (Thermococcus onnurineus (strain NA1)).